The following is a 502-amino-acid chain: ATP synthase subunit alpha (502 aa).

169–176 contributes to the ATP binding site; that stretch reads GDRQTGKT.

This sequence belongs to the ATPase alpha/beta chains family. As to quaternary structure, F-type ATPases have 2 components, CF(1) - the catalytic core - and CF(0) - the membrane proton channel. CF(1) has five subunits: alpha(3), beta(3), gamma(1), delta(1), epsilon(1). CF(0) has three main subunits: a(1), b(2) and c(9-12). The alpha and beta chains form an alternating ring which encloses part of the gamma chain. CF(1) is attached to CF(0) by a central stalk formed by the gamma and epsilon chains, while a peripheral stalk is formed by the delta and b chains.

It localises to the cell membrane. The enzyme catalyses ATP + H2O + 4 H(+)(in) = ADP + phosphate + 5 H(+)(out). Produces ATP from ADP in the presence of a proton gradient across the membrane. The alpha chain is a regulatory subunit. This chain is ATP synthase subunit alpha, found in Staphylococcus aureus (strain Mu3 / ATCC 700698).